Reading from the N-terminus, the 539-residue chain is MASRIINHSKKLKHVSALLRRDHAVAVRCFSNSTHPSLVGREDIFKARLNYSSVERISKCGTGNVTMLSGISTTSTKLSSPMAGPKLFKEFISSQMRSVRGFSSSSDLPPHQEIGMPSLSPTMTEGNIARWLKKEGDKVAPGEVLCEVETDKATVEMECMEEGFLAKIVKEEGAKEIQVGEVIAITVEDEDDIQKFKDYTPSSDTGPAAPEAKPAPSLPKEEKVEKPASAPEAKISKPSSAPSEDRIFASPLARKLAEDNNVPLSSIKGTGPEGRIVKADVEDFLASGSKETTAKPSKQVDSKVPALDYVDIPHTQIRKVTASRLAFSKQTIPHYYLTVDTCVDKMMGLRSQLNSFQEASGGKRISVNDLVIKAAALALRKVPQCNSSWTDEYIRQFKNVNINVAVQTENGLYVPVVKDADKKGLSTIGEEVRFLAQKAKENSLKPEDYEGGTFTVSNLGGPFGIKQFCAVINPPQAAILAIGSAEKRVVPGTGPDQYNVASYMSVTLSCDHRVIDGAIGAEWLKAFKGYIETPESMLL.

The transit peptide at 1 to 102 directs the protein to the mitochondrion; it reads MASRIINHSK…SSQMRSVRGF (102 aa). The segment at 102–122 is disordered; the sequence is FSSSSDLPPHQEIGMPSLSPT. Residues 111–187 enclose the Lipoyl-binding domain; it reads HQEIGMPSLS…QVGEVIAITV (77 aa). N6-lipoyllysine is present on K152. The disordered stretch occupies residues 196–244; it reads FKDYTPSSDTGPAAPEAKPAPSLPKEEKVEKPASAPEAKISKPSSAPSE. The Peripheral subunit-binding (PSBD) domain maps to 248 to 285; that stretch reads FASPLARKLAEDNNVPLSSIKGTGPEGRIVKADVEDFL. Active-site residues include H512 and D516.

This sequence belongs to the 2-oxoacid dehydrogenase family. Requires (R)-lipoate as cofactor.

The protein resides in the mitochondrion matrix. The catalysed reaction is N(6)-[(R)-dihydrolipoyl]-L-lysyl-[protein] + acetyl-CoA = N(6)-[(R)-S(8)-acetyldihydrolipoyl]-L-lysyl-[protein] + CoA. Functionally, the pyruvate dehydrogenase complex catalyzes the overall conversion of pyruvate to acetyl-CoA and CO(2). It contains multiple copies of three enzymatic components: pyruvate dehydrogenase (E1), dihydrolipoamide acetyltransferase (E2) and lipoamide dehydrogenase (E3). The chain is Dihydrolipoyllysine-residue acetyltransferase component 2 of pyruvate dehydrogenase complex, mitochondrial from Arabidopsis thaliana (Mouse-ear cress).